Consider the following 264-residue polypeptide: 3-deoxy-manno-octulosonate cytidylyltransferase (264 aa).

The protein belongs to the KdsB family.

Its subcellular location is the cytoplasm. The catalysed reaction is 3-deoxy-alpha-D-manno-oct-2-ulosonate + CTP = CMP-3-deoxy-beta-D-manno-octulosonate + diphosphate. Its pathway is nucleotide-sugar biosynthesis; CMP-3-deoxy-D-manno-octulosonate biosynthesis; CMP-3-deoxy-D-manno-octulosonate from 3-deoxy-D-manno-octulosonate and CTP: step 1/1. It functions in the pathway bacterial outer membrane biogenesis; lipopolysaccharide biosynthesis. Its function is as follows. Activates KDO (a required 8-carbon sugar) for incorporation into bacterial lipopolysaccharide in Gram-negative bacteria. This Marinomonas sp. (strain MWYL1) protein is 3-deoxy-manno-octulosonate cytidylyltransferase.